The sequence spans 482 residues: Cobyrinate a,c-diamide synthase (482 aa).

The GATase cobBQ-type domain maps to 248 to 441 (RLAIAQDQAF…LHLHWGSQIS (194 aa)). The active-site Nucleophile is the Cys331.

The protein belongs to the CobB/CbiA family. Mg(2+) serves as cofactor.

It catalyses the reaction cob(II)yrinate + 2 L-glutamine + 2 ATP + 2 H2O = cob(II)yrinate a,c diamide + 2 L-glutamate + 2 ADP + 2 phosphate + 2 H(+). It functions in the pathway cofactor biosynthesis; adenosylcobalamin biosynthesis; cob(II)yrinate a,c-diamide from sirohydrochlorin (anaerobic route): step 10/10. Functionally, catalyzes the ATP-dependent amidation of the two carboxylate groups at positions a and c of cobyrinate, using either L-glutamine or ammonia as the nitrogen source. This Synechocystis sp. (strain ATCC 27184 / PCC 6803 / Kazusa) protein is Cobyrinate a,c-diamide synthase.